A 237-amino-acid polypeptide reads, in one-letter code: tRNA (guanine-N(7)-)-methyltransferase (237 aa).

S-adenosyl-L-methionine-binding residues include glutamate 68, glutamate 93, aspartate 120, and aspartate 143. Aspartate 143 is a catalytic residue. Residues lysine 147, aspartate 179, and 216 to 219 (TKFE) each bind substrate.

It belongs to the class I-like SAM-binding methyltransferase superfamily. TrmB family.

The catalysed reaction is guanosine(46) in tRNA + S-adenosyl-L-methionine = N(7)-methylguanosine(46) in tRNA + S-adenosyl-L-homocysteine. It participates in tRNA modification; N(7)-methylguanine-tRNA biosynthesis. Catalyzes the formation of N(7)-methylguanine at position 46 (m7G46) in tRNA. The polypeptide is tRNA (guanine-N(7)-)-methyltransferase (Shewanella halifaxensis (strain HAW-EB4)).